A 403-amino-acid polypeptide reads, in one-letter code: NADH-quinone oxidoreductase subunit D (403 aa).

This sequence belongs to the complex I 49 kDa subunit family. In terms of assembly, NDH-1 is composed of 14 different subunits. Subunits NuoB, C, D, E, F, and G constitute the peripheral sector of the complex.

It is found in the cell inner membrane. It carries out the reaction a quinone + NADH + 5 H(+)(in) = a quinol + NAD(+) + 4 H(+)(out). Its function is as follows. NDH-1 shuttles electrons from NADH, via FMN and iron-sulfur (Fe-S) centers, to quinones in the respiratory chain. The immediate electron acceptor for the enzyme in this species is believed to be ubiquinone. Couples the redox reaction to proton translocation (for every two electrons transferred, four hydrogen ions are translocated across the cytoplasmic membrane), and thus conserves the redox energy in a proton gradient. The polypeptide is NADH-quinone oxidoreductase subunit D (Pelobacter propionicus (strain DSM 2379 / NBRC 103807 / OttBd1)).